The chain runs to 286 residues: 4-hydroxybenzoate octaprenyltransferase (286 aa).

7 helical membrane-spanning segments follow: residues 22-42 (IGTLLLLWPTLWALYLAEKAM), 45-65 (LSVLAIFICGVFLMRSAGCVI), 98-118 (LFIVLVFCSFLLVLCLNLYTI), 143-163 (FFLGAAFGWSIPMAYGATIEA), 213-233 (IIALLQIITLIFLFSVGYLSQ), 238-255 (YFIVLAIAGLFFVYQCRL), and 266-286 (NAFLNNNYFGLTVFIAVLFGI).

This sequence belongs to the UbiA prenyltransferase family. Mg(2+) serves as cofactor.

It localises to the cell inner membrane. The catalysed reaction is all-trans-octaprenyl diphosphate + 4-hydroxybenzoate = 4-hydroxy-3-(all-trans-octaprenyl)benzoate + diphosphate. It participates in cofactor biosynthesis; ubiquinone biosynthesis. In terms of biological role, catalyzes the prenylation of para-hydroxybenzoate (PHB) with an all-trans polyprenyl group. Mediates the second step in the final reaction sequence of ubiquinone-8 (UQ-8) biosynthesis, which is the condensation of the polyisoprenoid side chain with PHB, generating the first membrane-bound Q intermediate 3-octaprenyl-4-hydroxybenzoate. This Histophilus somni (strain 129Pt) (Haemophilus somnus) protein is 4-hydroxybenzoate octaprenyltransferase.